A 678-amino-acid polypeptide reads, in one-letter code: MSSDSLKKRKPKVNRSEDGKRGRHDEQEGRYYSEEAEVDVRDSREDYQLYKDTCVALQRLMSEIQDLKSKGSKDSAMEIEEKKIQSCVHFMTLKKLNRLANIRLKKARDQTHEAKQKVDAYNLQLQNLLYEVMHLQKEITKCLEFKSKHEEIELVSVEEFYSDAPAAISKPEITSTDPHQQTLSRLDWELEQRKRLAEKYKECLASKEKILKEIEIKKEYLNTLQPQLNSIMQASLPVQEYLSMPFDCMHKQYETARHLPAPLYVLFVQASAYSQACDQKLVVAIEGNVEEARALFKPPEDSQDDESDSDAEEEQTTKRRRPTLGVQLDDKRKEMLKRHPLCVTLTLMCKEGSTLTLTFYFLMNLNILTVKVKIQPAFELSTAISAGDLLNPDLILGCLYQGDDGKTTPNPANKYQFDKIGILSLSDYISELGHPYVWAQTMGGLHFPTDQPQPEFVADNALSASHMEKTIKLLKTRLLSRLSLHRQFASLEHGSIPVSLECQSLFPAKVISRLTKWNVIAYEDYLALPYTKDVVECGLAKETDQYFCLLIERGTAKLNGVVVLNPDYSSVPPVFSLCLNWKGERSSSNDDNIGVMESEVNVYYKELCGPPPGFQLLTNQIQRLCMLLDVYLETERHDNSVEGPHEFPPEKICLRLLRGPSRTKPFKYNYPQGFFSHR.

Disordered regions lie at residues 1–37 (MSSD…EEAE) and 294–329 (ALFK…VQLD). The Nuclear localization signal signature appears at 7 to 10 (KKRK). Basic and acidic residues predominate over residues 14–37 (NRSEDGKRGRHDEQEGRYYSEEAE). Over residues 301-314 (DSQDDESDSDAEEE) the composition is skewed to acidic residues.

This sequence belongs to the THOC5 family. In terms of assembly, component of the THO subcomplex, which is composed of thoc1, thoc2, thoc3, thoc5, thoc6 and thoc7. Component of the transcription/export (TREX) complex at least composed of alyref/thoc4, ddx39b, sarnp/cip29, chtop and the THO subcomplex. Interacts with thoc7.

The protein localises to the nucleus. It is found in the nucleus speckle. The protein resides in the cytoplasm. Its function is as follows. Component of the THO subcomplex of the TREX complex which is thought to couple mRNA transcription, processing and nuclear export, and which specifically associates with spliced mRNA and not with unspliced pre-mRNA. Plays a key structural role in the oligomerization of the THO-ddx39b complex. TREX is recruited to spliced mRNAs by a transcription-independent mechanism, binds to mRNA upstream of the exon-junction complex (EJC) and is recruited in a splicing- and cap-dependent manner to a region near the 5' end of the mRNA where it functions in mRNA export to the cytoplasm via the TAP/NXF1 pathway. May be involved in cell differentiation. This Xenopus laevis (African clawed frog) protein is THO complex subunit 5 homolog B (thoc5-b).